A 406-amino-acid chain; its full sequence is MLDRKLMESLGGWQGYGVERVEWPEDPGRTLSIYLKPTAKVMLCEQCGARCRQVHETTVRRVRDLPIFEYRVVLHVPRRRLWCEQCGGPRLERLAWLGRYQRVTDRLAQACSQLLQSSNVQAVARFFELGWHTVKTLDKARLRASVREPDWSKIEYLAMDEFALHKGHRYATVVVDPIGRQVLWIGPGRSRETARAFFEQLPPGAAQRIKAVAIDMTTAYELEIQAHSPQAEIVYDLFHVVAKYGREVIDRVRVDQANQLRQDRPARRIIKSSRWLLLRNRDNLDRQQAVRLDELLQANQPLLTVYVLRDELKRLWFYQRPAWARQAWNHWYEQAEQSGIAALNTFAQRLKGYLHGILARCRHPLNTSIVEGINNTIKVIKRRAYGYRDQEYFFLKIRAAFPGNAR.

It belongs to the transposase 12 family.

Involved in the transposition of the insertion sequence. The sequence is that of Transposase for insertion sequence element IS1001 (tnpA) from Bordetella parapertussis.